Here is a 229-residue protein sequence, read N- to C-terminus: MEEKAKAEQKKIGMTETWLKKHRLLYNGATRHPLIISIRDGTINTASFKTWLAQDYLFVRAFVPFVASVLIKAWKESDCSGDMEVILGGMASLEDEISWFKTEANKWGISLSDVVPQQANKNYCGLLESLMSPDAEYTVAITAFWAIETVYQESFAHCIEEGSKTPPELKETCVRWGNEAFGKYCQSLQNIANRCLQKASDEELKKAEVMLLSVLEHEVEFWNMSRGNV.

Cys-158 and Cys-173 are disulfide-bonded.

Belongs to the thiaminase-2 family.

The catalysed reaction is 4-amino-5-aminomethyl-2-methylpyrimidine + H2O = 4-amino-5-hydroxymethyl-2-methylpyrimidine + NH4(+). It catalyses the reaction N-formyl-4-amino-5-aminomethyl-2-methylpyrimidine + H2O = 4-amino-5-aminomethyl-2-methylpyrimidine + formate. It functions in the pathway cofactor biosynthesis; thiamine diphosphate biosynthesis. May be involved in thiamine salvage. The protein is Probable bifunctional TENA-E protein of Glycine max (Soybean).